A 260-amino-acid polypeptide reads, in one-letter code: Neuraminyllactose-binding hemagglutinin (260 aa).

Positions 1-27 (MKTNGHFKDFAWKKCLLGASVGALLVG) are cleaved as a signal peptide. Cys28 carries N-palmitoyl cysteine lipidation. Cys28 carries the S-diacylglycerol cysteine lipid modification. The interval 134-139 (KRTIQK) is N-acetyl-neuraminyl-alpha(2,3)-lactose binding motif.

Its subcellular location is the cell outer membrane. The protein is Neuraminyllactose-binding hemagglutinin (hpaA) of Helicobacter pylori (Campylobacter pylori).